Reading from the N-terminus, the 386-residue chain is 3-hydroxyisobutyryl-CoA hydrolase, mitochondrial (386 aa).

Residues 1-32 (MGLQGLCRLMSRFNSYKRTNIILQHLKMSNHT) constitute a mitochondrion transit peptide. Lys-92 carries the N6-acetyllysine; alternate modification. An N6-succinyllysine; alternate modification is found at Lys-92. Glu-121, Gly-146, Glu-169, and Asp-177 together coordinate substrate. N6-acetyllysine; alternate is present on Lys-221. Residue Lys-221 is modified to N6-succinyllysine; alternate. Ser-234 is subject to Phosphoserine. N6-succinyllysine occurs at positions 250 and 257. Residue Lys-297 is modified to N6-acetyllysine; alternate. Lys-297 is modified (N6-succinyllysine; alternate). Lys-301 is modified (N6-succinyllysine). Position 353 is an N6-acetyllysine; alternate (Lys-353). The residue at position 353 (Lys-353) is an N6-succinyllysine; alternate. Position 356 is a phosphoserine (Ser-356). An N6-acetyllysine mark is found at Lys-360 and Lys-365. N6-succinyllysine is present on Lys-377.

The protein belongs to the enoyl-CoA hydratase/isomerase family.

It is found in the mitochondrion. The catalysed reaction is 3-hydroxy-2-methylpropanoyl-CoA + H2O = 3-hydroxy-2-methylpropanoate + CoA + H(+). It functions in the pathway amino-acid degradation; L-valine degradation. Its function is as follows. Hydrolyzes 3-hydroxyisobutyryl-CoA (HIBYL-CoA), a saline catabolite. Has high activity toward isobutyryl-CoA. Could be an isobutyryl-CoA dehydrogenase that functions in valine catabolism. Also hydrolyzes 3-hydroxypropanoyl-CoA. The chain is 3-hydroxyisobutyryl-CoA hydrolase, mitochondrial (HIBCH) from Bos taurus (Bovine).